Here is a 206-residue protein sequence, read N- to C-terminus: ATP phosphoribosyltransferase (206 aa).

This sequence belongs to the ATP phosphoribosyltransferase family. Short subfamily. Heteromultimer composed of HisG and HisZ subunits.

Its subcellular location is the cytoplasm. The enzyme catalyses 1-(5-phospho-beta-D-ribosyl)-ATP + diphosphate = 5-phospho-alpha-D-ribose 1-diphosphate + ATP. It functions in the pathway amino-acid biosynthesis; L-histidine biosynthesis; L-histidine from 5-phospho-alpha-D-ribose 1-diphosphate: step 1/9. Catalyzes the condensation of ATP and 5-phosphoribose 1-diphosphate to form N'-(5'-phosphoribosyl)-ATP (PR-ATP). Has a crucial role in the pathway because the rate of histidine biosynthesis seems to be controlled primarily by regulation of HisG enzymatic activity. The sequence is that of ATP phosphoribosyltransferase from Sulfurovum sp. (strain NBC37-1).